The primary structure comprises 245 residues: tRNA (guanine-N(1)-)-methyltransferase (245 aa).

S-adenosyl-L-methionine contacts are provided by residues G111 and 131–136; that span reads MGDYVL.

This sequence belongs to the RNA methyltransferase TrmD family. As to quaternary structure, homodimer.

The protein localises to the cytoplasm. It carries out the reaction guanosine(37) in tRNA + S-adenosyl-L-methionine = N(1)-methylguanosine(37) in tRNA + S-adenosyl-L-homocysteine + H(+). Functionally, specifically methylates guanosine-37 in various tRNAs. This Staphylococcus aureus (strain USA300) protein is tRNA (guanine-N(1)-)-methyltransferase.